The following is a 667-amino-acid chain: Polypeptide N-acetylgalactosaminyltransferase 3 (667 aa).

Topologically, residues 1–12 are cytoplasmic; the sequence is MGLRFQQLKKLW. The chain crosses the membrane as a helical; Signal-anchor for type II membrane protein span at residues 13-35; the sequence is LLYLFLLFFAFFMFAISINLYVA. The Lumenal portion of the chain corresponds to 36-667; that stretch reads SIQGGDAEMR…WGFIPLPWRM (632 aa). N-linked (GlcNAc...) asparagine glycans are attached at residues N75 and N129. Intrachain disulfides connect C140-C375, C366-C446, C526-C547, C572-C601, and C626-C649. Residues 149–259 form a catalytic subdomain A region; that stretch reads LPSTSVIIVF…RGWLEPLLSR (111 aa). Residues D190 and R220 each coordinate substrate. Residues D243 and H245 each contribute to the Mn(2+) site. N-linked (GlcNAc...) asparagine glycans are attached at residues N279 and N313. The interval 321-383 is catalytic subdomain B; the sequence is PIATPGMAGG…PCSHVGHVFR (63 aa). W352 lines the substrate pocket. Mn(2+) is bound at residue H380. Residues R383 and Y388 each coordinate substrate. Residue N433 is glycosylated (N-linked (GlcNAc...) asparagine). Residues 513–661 enclose the Ricin B-type lectin domain; sequence EELMALIDLE…KDITQKWGFI (149 aa). N590 carries N-linked (GlcNAc...) asparagine glycosylation.

Belongs to the glycosyltransferase 2 family. GalNAc-T subfamily. It depends on Mn(2+) as a cofactor. Expressed in developing oocytes and egg chambers. During embryonic stages 9-11, expressed in the primordiums of the foregut, midgut and hindgut. During embryonic stages 12-13, expression is found uniquely in the posterior spiracle. During embryonic stages 14-17, expressed in the pharynx, esophagus and posterior spiracles. Expression observed in the epidermis during embryonic stages 16-17. In third instar larvae, expressed ubiquitously in wing, with increased expression in pleura and notum, eye-antennal, leg and haltere imaginal disks.

It localises to the golgi apparatus membrane. The enzyme catalyses L-seryl-[protein] + UDP-N-acetyl-alpha-D-galactosamine = a 3-O-[N-acetyl-alpha-D-galactosaminyl]-L-seryl-[protein] + UDP + H(+). The catalysed reaction is L-threonyl-[protein] + UDP-N-acetyl-alpha-D-galactosamine = a 3-O-[N-acetyl-alpha-D-galactosaminyl]-L-threonyl-[protein] + UDP + H(+). It participates in protein modification; protein glycosylation. Catalyzes the initial reaction in O-linked oligosaccharide biosynthesis, the transfer of an N-acetyl-D-galactosamine residue to a serine or threonine residue on the protein receptor. It can both act as a peptide transferase that transfers GalNAc onto unmodified peptide substrates, and as a glycopeptide transferase that requires the prior addition of a GalNAc on a peptide before adding additional GalNAc moieties. Prefers EA2 as substrate. Has weak activity toward Muc5AC-3, -13 and -3/13 substrates. Plays a critical role in the regulation of integrin-mediated cell adhesion during wing development by influencing, via glycosylation, the secretion and localization of the integrin ligand Tig to the basal cell layer interface. Might have a role in protein O-glycosylation in the Golgi and thereby in establishing and/or maintaining a proper secretory apparatus structure. Together with Pgant35A, regulates integrin levels and activity-dependent integrin signaling at the synapse in neurons and muscles. This is Polypeptide N-acetylgalactosaminyltransferase 3 from Drosophila melanogaster (Fruit fly).